A 228-amino-acid chain; its full sequence is Odorant-binding protein 47 (228 aa).

Disulfide bonds link C60-C225, C73-C215, C74-C204, C88-C114, C110-C185, and C158-C195. Residue N117 is glycosylated (N-linked (GlcNAc...) asparagine).

Belongs to the PBP/GOBP family. Glycosylated. Head without antennae (at protein level).

The protein resides in the secreted. Its function is as follows. Present in the aqueous fluid surrounding olfactory sensory dendrites and are thought to aid in the capture and transport of hydrophobic odorants into and through this fluid. Binds N-phenyl-1-naphthylamine, menthol, citronellal, 1-dodecanol, decanal, p-tert-butylbenzophenone, 4-hydroxy-4'-isopropylazobenzene, 2-pyrrolyl-p-methyl-azobenzene and indole. Expressed in mosquito head but barely detectable in antennae, which suggests that it may be present in mouth structures, such as palpi and proboscis, and may have a function in taste. The protein is Odorant-binding protein 47 of Anopheles gambiae (African malaria mosquito).